The following is a 353-amino-acid chain: GTPase Obg (353 aa).

Positions 1–159 (MKFIDEATIK…FELYLELKVL (159 aa)) constitute an Obg domain. An OBG-type G domain is found at 160-332 (ADVGLLGMPN…LTYAIMEHVE (173 aa)). Residues 166–173 (GMPNAGKS), 191–195 (FTTLH), 213–216 (DVPG), 284–287 (NKVD), and 313–315 (SAL) contribute to the GTP site. 2 residues coordinate Mg(2+): Ser-173 and Thr-193.

Belongs to the TRAFAC class OBG-HflX-like GTPase superfamily. OBG GTPase family. As to quaternary structure, monomer. It depends on Mg(2+) as a cofactor.

The protein localises to the cytoplasm. Functionally, an essential GTPase which binds GTP, GDP and possibly (p)ppGpp with moderate affinity, with high nucleotide exchange rates and a fairly low GTP hydrolysis rate. Plays a role in control of the cell cycle, stress response, ribosome biogenesis and in those bacteria that undergo differentiation, in morphogenesis control. The protein is GTPase Obg of Methylobacillus flagellatus (strain ATCC 51484 / DSM 6875 / VKM B-1610 / KT).